The chain runs to 363 residues: tRNA N6-adenosine threonylcarbamoyltransferase (363 aa).

Positions 127 and 131 each coordinate Fe cation. Substrate-binding positions include 150 to 154, D183, G196, and N290; that span reads LISGG. D318 contacts Fe cation.

It belongs to the KAE1 / TsaD family. Fe(2+) is required as a cofactor.

Its subcellular location is the cytoplasm. It catalyses the reaction L-threonylcarbamoyladenylate + adenosine(37) in tRNA = N(6)-L-threonylcarbamoyladenosine(37) in tRNA + AMP + H(+). Required for the formation of a threonylcarbamoyl group on adenosine at position 37 (t(6)A37) in tRNAs that read codons beginning with adenine. Is involved in the transfer of the threonylcarbamoyl moiety of threonylcarbamoyl-AMP (TC-AMP) to the N6 group of A37, together with TsaE and TsaB. TsaD likely plays a direct catalytic role in this reaction. The chain is tRNA N6-adenosine threonylcarbamoyltransferase from Zymomonas mobilis subsp. mobilis (strain ATCC 31821 / ZM4 / CP4).